The chain runs to 484 residues: 6-phosphogluconate dehydrogenase, decarboxylating (484 aa).

Residues 11–16, 34–36, 76–78, and N104 each bind NADP(+); these read GLAVMG, NRT, and VRA. Residues N104 and 130-132 contribute to the substrate site; that span reads SGG. K185 acts as the Proton acceptor in catalysis. Residue 188-189 participates in substrate binding; sequence HN. E192 (proton donor) is an active-site residue. Substrate contacts are provided by Y193, K262, R289, R447, and H453.

It belongs to the 6-phosphogluconate dehydrogenase family. In terms of assembly, homodimer.

It carries out the reaction 6-phospho-D-gluconate + NADP(+) = D-ribulose 5-phosphate + CO2 + NADPH. Its pathway is carbohydrate degradation; pentose phosphate pathway; D-ribulose 5-phosphate from D-glucose 6-phosphate (oxidative stage): step 3/3. Functionally, catalyzes the oxidative decarboxylation of 6-phosphogluconate to ribulose 5-phosphate and CO(2), with concomitant reduction of NADP to NADPH. In Haemophilus influenzae (strain ATCC 51907 / DSM 11121 / KW20 / Rd), this protein is 6-phosphogluconate dehydrogenase, decarboxylating (gnd).